Reading from the N-terminus, the 1273-residue chain is DNA gyrase subunit A (1273 aa).

The region spanning Leu-42 to Leu-931 is the Topo IIA-type catalytic domain. Tyr-130 acts as the O-(5'-phospho-DNA)-tyrosine intermediate in catalysis. One can recognise a DOD-type homing endonuclease domain in the interval Leu-256–Val-396. The GyrA-box signature appears at Gln-958–Gly-964.

This sequence belongs to the type II topoisomerase GyrA/ParC subunit family. In terms of assembly, heterotetramer, composed of two GyrA and two GyrB chains. In the heterotetramer, GyrA contains the active site tyrosine that forms a transient covalent intermediate with the DNA, while GyrB binds cofactors catalyzes ATP hydrolysis. In terms of processing, this protein undergoes a protein self splicing that involves a post-translational excision of the intervening region (intein) followed by peptide ligation.

It localises to the cytoplasm. The catalysed reaction is ATP-dependent breakage, passage and rejoining of double-stranded DNA.. DNA supercoiling is inhibited by fluoroquinolones; IC(50) 1 ug/ml for sitafloxacin. Its function is as follows. A type II topoisomerase that negatively supercoils closed circular double-stranded (ds) DNA in an ATP-dependent manner to modulate DNA topology and maintain chromosomes in an underwound state. Negative supercoiling favors strand separation, and DNA replication, transcription, recombination and repair, all of which involve strand separation. Also able to catalyze the interconversion of other topological isomers of dsDNA rings, including catenanes and knotted rings. Type II topoisomerases break and join 2 DNA strands simultaneously in an ATP-dependent manner. The polypeptide is DNA gyrase subunit A (Mycobacterium leprae (strain TN)).